The following is a 505-amino-acid chain: Monocarboxylate transporter 10 (505 aa).

Acidic residues predominate over residues 1–14; sequence MTEPEPTLEQEPTP. A disordered region spans residues 1 to 64; the sequence is MTEPEPTLEQ…EQKSPEEFEP (64 aa). The Cytoplasmic segment spans residues 1 to 66; it reads MTEPEPTLEQ…KSPEEFEPPE (66 aa). Over residues 15-31 the composition is skewed to pro residues; the sequence is EPEPTQEPTPEPTPEPE. Residues 32 to 41 show a composition bias toward acidic residues; that stretch reads PTQEPESEPE. Residues 67–87 traverse the membrane as a helical segment; sequence GGWGWVVMLASMWCNGSVFGI. Residues 88–114 lie on the Extracellular side of the membrane; that stretch reads QNAFGIMFVYLLNEFGSEHDADLRFKT. The chain crosses the membrane as a helical span at residues 115-135; the sequence is AWVGSLSMGMIFFCSPIVSVF. At 136-142 the chain is on the cytoplasmic side; that stretch reads TDLLGCR. The helical transmembrane segment at 143–163 threads the bilayer; that stretch reads ITAVGGAAVGCVGLLASSFVT. Residues 164–171 lie on the Extracellular side of the membrane; sequence SLGPMYFT. A helical transmembrane segment spans residues 172-192; sequence YGIVFACGCSFAYQPSLVILG. Residues 193-204 lie on the Cytoplasmic side of the membrane; sequence HYFKRRLGLVNG. The helical transmembrane segment at 205–225 threads the bilayer; it reads IVTAGSSVFTITLPYMLSGLL. At 226–235 the chain is on the extracellular side; that stretch reads KSVGLYHTLR. The helical transmembrane segment at 236–256 threads the bilayer; it reads VLAIFMFILMLAGLTYKPLLP. At 257–286 the chain is on the cytoplasmic side; sequence KPVSSSKPGSRCPPLSRIFNVNIWKSLGYR. Residues 287 to 307 traverse the membrane as a helical segment; the sequence is IWAFGIPAALYGYFVPYVHLM. Residues 308–321 lie on the Extracellular side of the membrane; sequence THVEERFGPEANKE. Residues 322 to 342 form a helical membrane-spanning segment; the sequence is VLLACIGITSGVGRLIFGRVA. A topological domain (cytoplasmic) is located at residue Asp-343. Residues 344–364 form a helical membrane-spanning segment; that stretch reads YVPGVNKVFLQVSSFMVIGVM. Residues 365-377 lie on the Extracellular side of the membrane; that stretch reads SMMIPLCHVFGGL. A helical transmembrane segment spans residues 378–400; that stretch reads IAVCLLMGLFDGCFICIMAPIAF. Over 401-411 the chain is Cytoplasmic; that stretch reads ELVGSQNVSQA. Residues 412–432 traverse the membrane as a helical segment; that stretch reads IGFLLGMMSIPMTVGPPIAGF. Residues 433 to 443 are Extracellular-facing; sequence LRDRLGSYDVA. Residues 444–464 form a helical membrane-spanning segment; sequence FYLAGIPPLIGGAVLCAIPWV. Residues 465 to 505 lie on the Cytoplasmic side of the membrane; sequence EARRKRREAANTAENTEKMLESRSPPLEDTVCRTEEPESVI. Residues 474 to 505 form a disordered region; the sequence is ANTAENTEKMLESRSPPLEDTVCRTEEPESVI. Residues 494-505 are compositionally biased toward basic and acidic residues; the sequence is TVCRTEEPESVI.

Belongs to the major facilitator superfamily. Monocarboxylate porter (TC 2.A.1.13) family.

It localises to the cell membrane. Its subcellular location is the basolateral cell membrane. It catalyses the reaction L-tryptophan(in) = L-tryptophan(out). The enzyme catalyses L-tyrosine(in) = L-tyrosine(out). The catalysed reaction is L-phenylalanine(in) = L-phenylalanine(out). It carries out the reaction 3,3',5-triiodo-L-thyronine(out) = 3,3',5-triiodo-L-thyronine(in). It catalyses the reaction L-thyroxine(out) = L-thyroxine(in). In terms of biological role, sodium- and proton-independent thyroid hormones and aromatic acids transporter. Mediates both uptake and efflux of 3,5,3'-triiodothyronine (T3) and 3,5,3',5'-tetraiodothyronine (T4) with high affinity, suggesting a role in the homeostasis of thyroid hormone levels. Responsible for low affinity bidirectional transport of the aromatic amino acids, such as phenylalanine, tyrosine, tryptophan and L-3,4-dihydroxyphenylalanine (L-dopa). Plays an important role in homeostasis of aromatic amino acids. This is Monocarboxylate transporter 10 (slc16a10) from Danio rerio (Zebrafish).